The primary structure comprises 263 residues: GTP cyclohydrolase 1 type 2 homolog (263 aa).

Residues His-76, His-77, Asp-113, His-231, and Glu-235 each coordinate a divalent metal cation.

It belongs to the GTP cyclohydrolase I type 2/NIF3 family. As to quaternary structure, homohexamer.

This Deinococcus radiodurans (strain ATCC 13939 / DSM 20539 / JCM 16871 / CCUG 27074 / LMG 4051 / NBRC 15346 / NCIMB 9279 / VKM B-1422 / R1) protein is GTP cyclohydrolase 1 type 2 homolog.